Consider the following 136-residue polypeptide: UPF0310 protein SMU_442 (136 aa).

Belongs to the UPF0310 family.

This chain is UPF0310 protein SMU_442, found in Streptococcus mutans serotype c (strain ATCC 700610 / UA159).